A 258-amino-acid polypeptide reads, in one-letter code: Imidazole glycerol phosphate synthase subunit HisF (258 aa).

Residues Asp-11 and Asp-130 contribute to the active site.

The protein belongs to the HisA/HisF family. In terms of assembly, heterodimer of HisH and HisF.

It is found in the cytoplasm. The catalysed reaction is 5-[(5-phospho-1-deoxy-D-ribulos-1-ylimino)methylamino]-1-(5-phospho-beta-D-ribosyl)imidazole-4-carboxamide + L-glutamine = D-erythro-1-(imidazol-4-yl)glycerol 3-phosphate + 5-amino-1-(5-phospho-beta-D-ribosyl)imidazole-4-carboxamide + L-glutamate + H(+). It participates in amino-acid biosynthesis; L-histidine biosynthesis; L-histidine from 5-phospho-alpha-D-ribose 1-diphosphate: step 5/9. Functionally, IGPS catalyzes the conversion of PRFAR and glutamine to IGP, AICAR and glutamate. The HisF subunit catalyzes the cyclization activity that produces IGP and AICAR from PRFAR using the ammonia provided by the HisH subunit. The chain is Imidazole glycerol phosphate synthase subunit HisF from Shigella sonnei (strain Ss046).